The primary structure comprises 86 residues: Small ribosomal subunit protein uS17 (86 aa).

It belongs to the universal ribosomal protein uS17 family. In terms of assembly, part of the 30S ribosomal subunit.

Its function is as follows. One of the primary rRNA binding proteins, it binds specifically to the 5'-end of 16S ribosomal RNA. This Streptococcus gordonii (strain Challis / ATCC 35105 / BCRC 15272 / CH1 / DL1 / V288) protein is Small ribosomal subunit protein uS17.